A 174-amino-acid chain; its full sequence is ATP-dependent protease subunit HslV (174 aa).

Thr-2 is an active-site residue. Na(+) is bound by residues Ala-156, Cys-159, and Thr-162.

The protein belongs to the peptidase T1B family. HslV subfamily. A double ring-shaped homohexamer of HslV is capped on each side by a ring-shaped HslU homohexamer. The assembly of the HslU/HslV complex is dependent on binding of ATP.

The protein resides in the cytoplasm. It catalyses the reaction ATP-dependent cleavage of peptide bonds with broad specificity.. Allosterically activated by HslU binding. Protease subunit of a proteasome-like degradation complex believed to be a general protein degrading machinery. The chain is ATP-dependent protease subunit HslV from Agrobacterium fabrum (strain C58 / ATCC 33970) (Agrobacterium tumefaciens (strain C58)).